The following is a 238-amino-acid chain: Survival of motor neuron-related-splicing factor 30 (238 aa).

Residues 72–132 (SWKVGDKCMA…KPVEEGRKAK (61 aa)) enclose the Tudor domain. The Nuclear localization signal signature appears at 142–160 (KKEMIAQQREYKKKKALKK). Position 201 is a phosphoserine (S201). K219 is subject to N6-acetyllysine.

The protein belongs to the SMN family. Associates with spliceosomes. Associates with U4/U5/U6 tri-snRNP and with U2 snRNP.

The protein localises to the nucleus speckle. It localises to the nucleus. It is found in the cajal body. In terms of biological role, involved in spliceosome assembly. The chain is Survival of motor neuron-related-splicing factor 30 (Smndc1) from Rattus norvegicus (Rat).